The sequence spans 409 residues: Argininosuccinate synthase (409 aa).

Residues 10–18 (AYSGGLDTS) and alanine 37 each bind ATP. Residues tyrosine 90 and serine 95 each coordinate L-citrulline. Glycine 120 contacts ATP. Positions 122, 126, and 127 each coordinate L-aspartate. Asparagine 126 contributes to the L-citrulline binding site. Residues arginine 130, serine 182, serine 191, glutamate 267, and tyrosine 279 each contribute to the L-citrulline site.

Belongs to the argininosuccinate synthase family. Type 1 subfamily. As to quaternary structure, homotetramer.

The protein localises to the cytoplasm. It carries out the reaction L-citrulline + L-aspartate + ATP = 2-(N(omega)-L-arginino)succinate + AMP + diphosphate + H(+). It functions in the pathway amino-acid biosynthesis; L-arginine biosynthesis; L-arginine from L-ornithine and carbamoyl phosphate: step 2/3. The polypeptide is Argininosuccinate synthase (Azoarcus sp. (strain BH72)).